A 199-amino-acid polypeptide reads, in one-letter code: Recombination protein RecR (199 aa).

The C4-type zinc-finger motif lies at 57–72; that stretch reads CSICGNITEGDPCSIC. Residues 80-176 form the Toprim domain; sequence THVLVVEQPK…KVTRLAHGLS (97 aa).

This sequence belongs to the RecR family.

In terms of biological role, may play a role in DNA repair. It seems to be involved in an RecBC-independent recombinational process of DNA repair. It may act with RecF and RecO. This is Recombination protein RecR from Levilactobacillus brevis (strain ATCC 367 / BCRC 12310 / CIP 105137 / JCM 1170 / LMG 11437 / NCIMB 947 / NCTC 947) (Lactobacillus brevis).